A 956-amino-acid chain; its full sequence is Golgin candidate 5 (956 aa).

Disordered regions lie at residues 70–230 (MSFM…QHKI) and 278–298 (IFES…SSDE). Basic and acidic residues-rich tracts occupy residues 77-89 (SDEK…DSVR) and 118-129 (ANKETNVRREAD). Composition is skewed to polar residues over residues 160–177 (EYSL…SLQP) and 184–193 (TASQDSQPEQ). Positions 206 to 219 (SEAKEVTVENKDTV) are enriched in basic and acidic residues. Residues 333–765 (SDSADVILEL…LIQKDLEREK (433 aa)) adopt a coiled-coil conformation. A Phosphoserine modification is found at serine 793. The stretch at 851 to 951 (SAYEATLRQK…EMYREQVNML (101 aa)) forms a coiled coil.

As to quaternary structure, interacts with RABH1B and RABH1C, but not with RABD1 or RABD2A.

It localises to the golgi apparatus. The protein resides in the cytoplasm. Functionally, golgi matrix protein playing a role in tethering of vesicles to Golgi membranes and in maintaining the overall structure of the Golgi apparatus. The chain is Golgin candidate 5 (GC5) from Arabidopsis thaliana (Mouse-ear cress).